The following is a 289-amino-acid chain: 4-diphosphocytidyl-2-C-methyl-D-erythritol kinase (289 aa).

Lysine 16 is a catalytic residue. 99–109 (PMGGGIGGGSS) contributes to the ATP binding site. Aspartate 141 is a catalytic residue.

The protein belongs to the GHMP kinase family. IspE subfamily.

It catalyses the reaction 4-CDP-2-C-methyl-D-erythritol + ATP = 4-CDP-2-C-methyl-D-erythritol 2-phosphate + ADP + H(+). It functions in the pathway isoprenoid biosynthesis; isopentenyl diphosphate biosynthesis via DXP pathway; isopentenyl diphosphate from 1-deoxy-D-xylulose 5-phosphate: step 3/6. Its function is as follows. Catalyzes the phosphorylation of the position 2 hydroxy group of 4-diphosphocytidyl-2C-methyl-D-erythritol. This chain is 4-diphosphocytidyl-2-C-methyl-D-erythritol kinase, found in Ralstonia nicotianae (strain ATCC BAA-1114 / GMI1000) (Ralstonia solanacearum).